A 187-amino-acid chain; its full sequence is Elongation factor P (187 aa).

It belongs to the elongation factor P family.

The protein resides in the cytoplasm. It functions in the pathway protein biosynthesis; polypeptide chain elongation. Involved in peptide bond synthesis. Stimulates efficient translation and peptide-bond synthesis on native or reconstituted 70S ribosomes in vitro. Probably functions indirectly by altering the affinity of the ribosome for aminoacyl-tRNA, thus increasing their reactivity as acceptors for peptidyl transferase. This is Elongation factor P from Roseobacter denitrificans (strain ATCC 33942 / OCh 114) (Erythrobacter sp. (strain OCh 114)).